A 602-amino-acid polypeptide reads, in one-letter code: Elongation factor 4 (602 aa).

A tr-type G domain is found at 7 to 189; that stretch reads RNIRNFSIIA…AIVQRIPAPQ (183 aa). Residues 19 to 24 and 136 to 139 contribute to the GTP site; these read DHGKST and NKID.

It belongs to the TRAFAC class translation factor GTPase superfamily. Classic translation factor GTPase family. LepA subfamily.

Its subcellular location is the cell inner membrane. It catalyses the reaction GTP + H2O = GDP + phosphate + H(+). Functionally, required for accurate and efficient protein synthesis under certain stress conditions. May act as a fidelity factor of the translation reaction, by catalyzing a one-codon backward translocation of tRNAs on improperly translocated ribosomes. Back-translocation proceeds from a post-translocation (POST) complex to a pre-translocation (PRE) complex, thus giving elongation factor G a second chance to translocate the tRNAs correctly. Binds to ribosomes in a GTP-dependent manner. This chain is Elongation factor 4, found in Xylella fastidiosa (strain M12).